The following is an 858-amino-acid chain: DNA mismatch repair protein MutS (858 aa).

Position 618-625 (618-625) interacts with ATP; sequence GPNMGGKS.

The protein belongs to the DNA mismatch repair MutS family.

In terms of biological role, this protein is involved in the repair of mismatches in DNA. It is possible that it carries out the mismatch recognition step. This protein has a weak ATPase activity. In Shewanella woodyi (strain ATCC 51908 / MS32), this protein is DNA mismatch repair protein MutS.